Here is a 279-residue protein sequence, read N- to C-terminus: Pantothenate synthetase (279 aa).

26 to 33 (MGNLHEGH) is an ATP binding site. Catalysis depends on His-33, which acts as the Proton donor. Residue Gln-57 coordinates (R)-pantoate. Gln-57 contacts beta-alanine. 144 to 147 (GKKD) lines the ATP pocket. Position 150 (Gln-150) interacts with (R)-pantoate. ATP is bound by residues Val-173 and 181-184 (LSSR).

The protein belongs to the pantothenate synthetase family. As to quaternary structure, homodimer.

The protein resides in the cytoplasm. The enzyme catalyses (R)-pantoate + beta-alanine + ATP = (R)-pantothenate + AMP + diphosphate + H(+). Its pathway is cofactor biosynthesis; (R)-pantothenate biosynthesis; (R)-pantothenate from (R)-pantoate and beta-alanine: step 1/1. Functionally, catalyzes the condensation of pantoate with beta-alanine in an ATP-dependent reaction via a pantoyl-adenylate intermediate. In Burkholderia ambifaria (strain MC40-6), this protein is Pantothenate synthetase.